A 299-amino-acid polypeptide reads, in one-letter code: Glycine--tRNA ligase alpha subunit (299 aa).

This sequence belongs to the class-II aminoacyl-tRNA synthetase family. In terms of assembly, tetramer of two alpha and two beta subunits.

The protein resides in the cytoplasm. It carries out the reaction tRNA(Gly) + glycine + ATP = glycyl-tRNA(Gly) + AMP + diphosphate. In Lactiplantibacillus plantarum (strain ATCC BAA-793 / NCIMB 8826 / WCFS1) (Lactobacillus plantarum), this protein is Glycine--tRNA ligase alpha subunit.